A 246-amino-acid chain; its full sequence is Polyhedrin (246 aa).

It belongs to the polyhedrin family.

Functionally, major component of the virus occlusion bodies, which are large proteinaceous structures (polyhedra), that protect the virus from the outside environment for extended periods until they are ingested by insect larvae. The polypeptide is Polyhedrin (PH) (Heliothis zea nuclear polyhedrosis virus (HzSNPV)).